We begin with the raw amino-acid sequence, 384 residues long: MDLSRPRWSLWRRVFLMASLLACGICQASGQIFITQTLGIKGYRTVVALDKVPEDVQEYSWYWGANDSAGNMIISHKPPSAQQPGPMYTGRERVNREGSLLIRPTALNDTGNYTVRVVAGNETQRATGWLEVLELGSNLGISVNASSLVENMDSVAADCLTNVTNITWYVNDVPTSSSDRMTISPDGKTLVILRVSRYDRTIQCMIESFPEIFQRSERISLTVAYGPDYVLLRSNPDDFNGIVTAEIGSQVEMECICYSFLDLKYHWIHNGSLLNFSDAKMNLSSLAWEQMGRYRCTVENPVTQLIMYMDVRIQAPHEDLTCCPQRFLHLRIHGDVPHHADSAGWRLHLWSPDPCSDQPLLNQDKSGSMSVHPRPEDKTRRASR.

The first 30 residues, 1–30, serve as a signal peptide directing secretion; the sequence is MDLSRPRWSLWRRVFLMASLLACGICQASG. N-linked (GlcNAc...) asparagine glycans are attached at residues Asn-108, Asn-112, Asn-121, Asn-162, and Asn-270. The region spanning 227 to 314 is the Ig-like C2-type domain; the sequence is PDYVLLRSNP…LIMYMDVRIQ (88 aa). A disulfide bridge links Cys-255 with Cys-296. The disordered stretch occupies residues 358 to 384; it reads QPLLNQDKSGSMSVHPRPEDKTRRASR. Residues 359-369 show a composition bias toward polar residues; sequence PLLNQDKSGSM. Residues 373-384 are compositionally biased toward basic and acidic residues; that stretch reads PRPEDKTRRASR.

It belongs to the immunoglobulin superfamily. CEA family.

The protein is Cell adhesion molecule CEACAM18 of Homo sapiens (Human).